Consider the following 499-residue polypeptide: UDP-N-acetylmuramoylalanine--D-glutamate ligase (499 aa).

129 to 135 (GTNGKTT) contributes to the ATP binding site.

Belongs to the MurCDEF family.

It localises to the cytoplasm. The enzyme catalyses UDP-N-acetyl-alpha-D-muramoyl-L-alanine + D-glutamate + ATP = UDP-N-acetyl-alpha-D-muramoyl-L-alanyl-D-glutamate + ADP + phosphate + H(+). The protein operates within cell wall biogenesis; peptidoglycan biosynthesis. Functionally, cell wall formation. Catalyzes the addition of glutamate to the nucleotide precursor UDP-N-acetylmuramoyl-L-alanine (UMA). The protein is UDP-N-acetylmuramoylalanine--D-glutamate ligase of Ralstonia nicotianae (strain ATCC BAA-1114 / GMI1000) (Ralstonia solanacearum).